The chain runs to 212 residues: Phosphatidylserine decarboxylase proenzyme (212 aa).

The active-site Schiff-base intermediate with substrate; via pyruvic acid is serine 182. Serine 182 is modified (pyruvic acid (Ser); by autocatalysis).

The protein belongs to the phosphatidylserine decarboxylase family. PSD-A subfamily. In terms of assembly, heterodimer of a large membrane-associated beta subunit and a small pyruvoyl-containing alpha subunit. Pyruvate is required as a cofactor. Is synthesized initially as an inactive proenzyme. Formation of the active enzyme involves a self-maturation process in which the active site pyruvoyl group is generated from an internal serine residue via an autocatalytic post-translational modification. Two non-identical subunits are generated from the proenzyme in this reaction, and the pyruvate is formed at the N-terminus of the alpha chain, which is derived from the carboxyl end of the proenzyme. The post-translation cleavage follows an unusual pathway, termed non-hydrolytic serinolysis, in which the side chain hydroxyl group of the serine supplies its oxygen atom to form the C-terminus of the beta chain, while the remainder of the serine residue undergoes an oxidative deamination to produce ammonia and the pyruvoyl prosthetic group on the alpha chain.

The protein localises to the cell membrane. The catalysed reaction is a 1,2-diacyl-sn-glycero-3-phospho-L-serine + H(+) = a 1,2-diacyl-sn-glycero-3-phosphoethanolamine + CO2. It functions in the pathway phospholipid metabolism; phosphatidylethanolamine biosynthesis; phosphatidylethanolamine from CDP-diacylglycerol: step 2/2. Catalyzes the formation of phosphatidylethanolamine (PtdEtn) from phosphatidylserine (PtdSer). This is Phosphatidylserine decarboxylase proenzyme from Pelodictyon phaeoclathratiforme (strain DSM 5477 / BU-1).